Reading from the N-terminus, the 259-residue chain is MRAGRGTLGVCLASVKQSQGGDLDKLACGLKRRSEKRNPSPSDVPSWTDQPVADTHGKSRAMAAASSEMKRDQSKASLILHSGFKALQYLKESMGRNSTPAASLSMAVVLSSAPSEEHGAGVSGGIGDTLGSDWPAREPRTTDSCGQYLKGEAWVSGWQGHPKVREVGFLRGEPLSAVPKGLGTRSELSYCSELCQLPYTYPYYEALPEDKTRCVSLDHLSPVFSEETVEDEKTLSSTSDGLQIVMGLLALQSSRLTSL.

A disordered region spans residues 29–66; the sequence is GLKRRSEKRNPSPSDVPSWTDQPVADTHGKSRAMAAAS. Polar residues predominate over residues 39–49; that stretch reads PSPSDVPSWTD.

As to quaternary structure, interacts with transcriptional activator STAT3; the interaction occurs in both the nucleus and the cytoplasm, is enhanced by IL6 and promotes STAT3 dephosphorylation, leading to negative regulation of STAT3 transcriptional activator activity. Can interact with both unphosphorylated and phosphorylated STAT3 but interacts preferentially with phosphorylated STAT3 in the nucleus. Interacts with protein phosphatase PTPN2/TC45; this promotes interaction of PTPN2 with STAT3, leading to dephosphorylation of STAT3 by PTPN2.

The protein localises to the nucleus. It is found in the cytoplasm. Its subcellular location is the cytoplasmic vesicle. It localises to the secretory vesicle. The protein resides in the acrosome. Promotes dephosphorylation of transcriptional activator STAT3 by interacting with both STAT3 and protein phosphatase PTPN2. This promotes interaction of PTPN2 with STAT3 and mediates STAT3 dephosphorylation by PTPN2, leading to negative regulation of STAT3 transcriptional activator activity. May be required for spermiogenesis or sperm function. The chain is Protein FAM220A (Fam220a) from Rattus norvegicus (Rat).